The chain runs to 137 residues: Putative transcription elongation factor S-II-like protein 055R (137 aa).

A TFIIS-type zinc finger spans residues 85-136 (DFITCPYEVSEGVLRCGKCDCTKILWFSKQTRSMDEPTTIFASCSNCKTRWT). Zn(2+)-binding residues include Cys89, Cys103, Cys128, and Cys131.

The protein belongs to the IIV-6 349L family.

This Aedes vexans (Inland floodwater mosquito) protein is Putative transcription elongation factor S-II-like protein 055R.